A 418-amino-acid chain; its full sequence is Gamma-glutamyl phosphate reductase (418 aa).

This sequence belongs to the gamma-glutamyl phosphate reductase family.

The protein localises to the cytoplasm. It carries out the reaction L-glutamate 5-semialdehyde + phosphate + NADP(+) = L-glutamyl 5-phosphate + NADPH + H(+). Its pathway is amino-acid biosynthesis; L-proline biosynthesis; L-glutamate 5-semialdehyde from L-glutamate: step 2/2. Functionally, catalyzes the NADPH-dependent reduction of L-glutamate 5-phosphate into L-glutamate 5-semialdehyde and phosphate. The product spontaneously undergoes cyclization to form 1-pyrroline-5-carboxylate. This chain is Gamma-glutamyl phosphate reductase, found in Desulfotalea psychrophila (strain LSv54 / DSM 12343).